Consider the following 651-residue polypeptide: Acetyl-coenzyme A synthetase (651 aa).

CoA is bound by residues 191 to 194, Thr311, and Asn335; that span reads RGGK. Residues 387–389, 411–416, Asp500, and Arg515 contribute to the ATP site; these read GEP and DTWWQT. Residue Ser523 participates in CoA binding. Residue Arg526 participates in ATP binding. Mg(2+) contacts are provided by Val537, His539, and Val542. Arg584 lines the CoA pocket. An N6-acetyllysine modification is found at Lys609.

The protein belongs to the ATP-dependent AMP-binding enzyme family. The cofactor is Mg(2+). In terms of processing, acetylated. Deacetylation by the SIR2-homolog deacetylase activates the enzyme.

It carries out the reaction acetate + ATP + CoA = acetyl-CoA + AMP + diphosphate. Functionally, catalyzes the conversion of acetate into acetyl-CoA (AcCoA), an essential intermediate at the junction of anabolic and catabolic pathways. AcsA undergoes a two-step reaction. In the first half reaction, AcsA combines acetate with ATP to form acetyl-adenylate (AcAMP) intermediate. In the second half reaction, it can then transfer the acetyl group from AcAMP to the sulfhydryl group of CoA, forming the product AcCoA. The protein is Acetyl-coenzyme A synthetase of Pseudomonas syringae pv. syringae (strain B728a).